Consider the following 125-residue polypeptide: Ribonuclease P protein component (125 aa).

The protein belongs to the RnpA family. In terms of assembly, consists of a catalytic RNA component (M1 or rnpB) and a protein subunit.

The catalysed reaction is Endonucleolytic cleavage of RNA, removing 5'-extranucleotides from tRNA precursor.. Functionally, RNaseP catalyzes the removal of the 5'-leader sequence from pre-tRNA to produce the mature 5'-terminus. It can also cleave other RNA substrates such as 4.5S RNA. The protein component plays an auxiliary but essential role in vivo by binding to the 5'-leader sequence and broadening the substrate specificity of the ribozyme. The polypeptide is Ribonuclease P protein component (Clostridium beijerinckii (strain ATCC 51743 / NCIMB 8052) (Clostridium acetobutylicum)).